We begin with the raw amino-acid sequence, 270 residues long: Undecaprenyl-diphosphatase 2 (270 aa).

8 helical membrane-spanning segments follow: residues M1–V21, Q39–F59, W87–I107, P114–V134, L147–T167, F190–L210, A221–L241, and V247–F267.

This sequence belongs to the UppP family.

It is found in the cell inner membrane. The enzyme catalyses di-trans,octa-cis-undecaprenyl diphosphate + H2O = di-trans,octa-cis-undecaprenyl phosphate + phosphate + H(+). Catalyzes the dephosphorylation of undecaprenyl diphosphate (UPP). Confers resistance to bacitracin. This is Undecaprenyl-diphosphatase 2 from Stutzerimonas stutzeri (strain A1501) (Pseudomonas stutzeri).